A 235-amino-acid polypeptide reads, in one-letter code: Tissue factor pathway inhibitor 2 (235 aa).

Residues 1–22 (MDPARPLGLSILLLFLTEAALG) form the signal peptide. BPTI/Kunitz inhibitor domains are found at residues 36–86 (CLLP…DDAC), 96–149 (CRLQ…MGFC), and 158–208 (CYSP…KRAC). 9 disulfide bridges follow: C36–C86, C45–C69, C61–C82, C96–C149, C106–C130, C122–C145, C158–C208, C167–C191, and C183–C204. N-linked (GlcNAc...) asparagine glycosylation is present at N116. N170 carries an N-linked (GlcNAc...) asparagine glycan.

In terms of assembly, finds in a complex with ABCB1, TFPI2 and PPP2R3C; leading to the dephosphorylation of ABCB1. In terms of tissue distribution, umbilical vein endothelial cells, liver, placenta, heart, pancreas, and maternal serum at advanced pregnancy.

It localises to the secreted. Functionally, may play a role in the regulation of plasmin-mediated matrix remodeling. Inhibits trypsin, plasmin, factor VIIa/tissue factor and weakly factor Xa. Has no effect on thrombin. In Homo sapiens (Human), this protein is Tissue factor pathway inhibitor 2 (TFPI2).